Here is a 114-residue protein sequence, read N- to C-terminus: Ribosome-binding factor A (114 aa).

This sequence belongs to the RbfA family. In terms of assembly, monomer. Binds 30S ribosomal subunits, but not 50S ribosomal subunits or 70S ribosomes.

It is found in the cytoplasm. Its function is as follows. One of several proteins that assist in the late maturation steps of the functional core of the 30S ribosomal subunit. Associates with free 30S ribosomal subunits (but not with 30S subunits that are part of 70S ribosomes or polysomes). Required for efficient processing of 16S rRNA. May interact with the 5'-terminal helix region of 16S rRNA. The sequence is that of Ribosome-binding factor A from Phytoplasma mali (strain AT).